A 1133-amino-acid polypeptide reads, in one-letter code: Lysylphosphatidylglycerol biosynthesis bifunctional protein LysX (1133 aa).

The tract at residues 1-626 (MTTVDASPGI…LLHHDGSTPD (626 aa)) is phosphatidylglycerol lysyltransferase. Helical transmembrane passes span 43–63 (VPAA…IASV), 82–102 (LFNF…LAAA), 109–129 (IAWL…AVDM), 140–160 (FGEN…VLSY), 177–197 (AVLV…VELF), 233–253 (LNAI…IVLF), and 575–595 (LIPR…LPFS). The interval 627 to 1133 (VSGLQTADVD…TLPFPLAKPH (507 aa)) is lysine--tRNA ligase. Asp-1045 and Glu-1052 together coordinate Mg(2+).

This sequence in the N-terminal section; belongs to the LPG synthetase family. It in the C-terminal section; belongs to the class-II aminoacyl-tRNA synthetase family. Mg(2+) serves as cofactor.

The protein resides in the cell membrane. The enzyme catalyses tRNA(Lys) + L-lysine + ATP = L-lysyl-tRNA(Lys) + AMP + diphosphate. The catalysed reaction is L-lysyl-tRNA(Lys) + a 1,2-diacyl-sn-glycero-3-phospho-(1'-sn-glycerol) = a 1,2-diacyl-sn-glycero-3-phospho-1'-(3'-O-L-lysyl)-sn-glycerol + tRNA(Lys). Functionally, catalyzes the production of L-lysyl-tRNA(Lys)transfer and the transfer of a lysyl group from L-lysyl-tRNA(Lys) to membrane-bound phosphatidylglycerol (PG), which produces lysylphosphatidylglycerol (LPG), one of the components of the bacterial membrane with a positive net charge. LPG synthesis contributes to the resistance to cationic antimicrobial peptides (CAMPs) and likely protects M.tuberculosis against the CAMPs produced by competiting microorganisms (bacteriocins). In fact, the modification of anionic phosphatidylglycerol with positively charged L-lysine results in repulsion of the peptides. The polypeptide is Lysylphosphatidylglycerol biosynthesis bifunctional protein LysX (lysX) (Mycobacterium leprae (strain Br4923)).